A 506-amino-acid chain; its full sequence is Histidine ammonia-lyase (506 aa).

The 5-imidazolinone (Ala-Gly) cross-link spans 143–145 (ASG). Residue S144 is modified to 2,3-didehydroalanine (Ser).

The protein belongs to the PAL/histidase family. Contains an active site 4-methylidene-imidazol-5-one (MIO), which is formed autocatalytically by cyclization and dehydration of residues Ala-Ser-Gly.

It localises to the cytoplasm. It catalyses the reaction L-histidine = trans-urocanate + NH4(+). Its pathway is amino-acid degradation; L-histidine degradation into L-glutamate; N-formimidoyl-L-glutamate from L-histidine: step 1/3. This Salmonella typhi protein is Histidine ammonia-lyase.